A 132-amino-acid polypeptide reads, in one-letter code: Agouti-signaling protein (132 aa).

The signal sequence occupies residues 1–22 (MDVTRLLLATLLVFLCFFTAYS). A glycan (N-linked (GlcNAc...) asparagine) is linked at Asn-39. The tract at residues 61-87 (QISRKEAEKKRSSKKEASMKKVARPRT) is disordered. Residues 63–79 (SRKEAEKKRSSKKEASM) are compositionally biased toward basic and acidic residues. 5 disulfides stabilise this stretch: Cys-93–Cys-108, Cys-100–Cys-114, Cys-107–Cys-125, Cys-111–Cys-132, and Cys-116–Cys-123. The region spanning 93-132 (CVATRDSCKSPAPACCDPCASCQCRFFRSACSCRVLSLNC) is the Agouti domain.

The protein resides in the secreted. Involved in the regulation of melanogenesis. The binding of ASP to MC1R precludes alpha-MSH initiated signaling and thus blocks production of cAMP, leading to a down-regulation of eumelanogenesis (brown/black pigment) and thus increasing synthesis of pheomelanin (yellow/red pigment). This Macaca nigra (Celebes black macaque) protein is Agouti-signaling protein (ASIP).